A 302-amino-acid chain; its full sequence is Tissue factor pathway inhibitor (302 aa).

The first 28 residues, 1–28 (MTNKLKKDHAFWAAVCLLLSIVPELLNA), serve as a signal peptide directing secretion. BPTI/Kunitz inhibitor domains lie at 53–103 (CAMK…RKTC), 124–174 (CFLE…RNTC), and 222–272 (CLEP…NRAC). Disulfide bonds link Cys53-Cys103, Cys62-Cys86, Cys78-Cys99, Cys124-Cys174, Cys133-Cys157, Cys149-Cys170, Cys222-Cys272, Cys231-Cys255, and Cys247-Cys268. An N-linked (GlcNAc...) asparagine glycan is attached at Asn144. Residues Asn251 and Asn261 are each glycosylated (N-linked (GlcNAc...) asparagine).

As to expression, most abundant in heart, lung, kidney, and aortic endothelial cells.

The protein localises to the secreted. Inhibits factor X (X(a)) directly and, in a Xa-dependent way, inhibits VIIa/tissue factor activity, presumably by forming a quaternary Xa/LACI/VIIa/TF complex. It possesses an antithrombotic action and also the ability to associate with lipoproteins in plasma. This Rattus norvegicus (Rat) protein is Tissue factor pathway inhibitor (Tfpi).